We begin with the raw amino-acid sequence, 190 residues long: Cancer-related nucleoside-triphosphatase homolog (190 aa).

Ala-2 carries the N-acetylalanine modification. ATP is bound by residues Gly-9–Thr-16 and Ile-109–Gly-116. Residue Lys-165 is modified to N6-acetyllysine.

Belongs to the THEP1 NTPase family. In terms of assembly, monomer.

It carries out the reaction a ribonucleoside 5'-triphosphate + H2O = a ribonucleoside 5'-diphosphate + phosphate + H(+). It catalyses the reaction 5-methyl-UTP + H2O = 5-methyl-UDP + phosphate + H(+). The enzyme catalyses CTP + H2O = CDP + phosphate + H(+). The catalysed reaction is ATP + H2O = ADP + phosphate + H(+). It carries out the reaction GTP + H2O = GDP + phosphate + H(+). In terms of biological role, has nucleotide phosphatase activity towards ATP, GTP, CTP, TTP and UTP. Hydrolyzes nucleoside diphosphates with lower efficiency. The polypeptide is Cancer-related nucleoside-triphosphatase homolog (NTPCR) (Bos taurus (Bovine)).